Consider the following 143-residue polypeptide: Peptidyl-prolyl cis-trans isomerase FKBP15-3 (143 aa).

Residues 56-143 (GKRVSVHYTG…VFDVELLNVK (88 aa)) enclose the PPIase FKBP-type domain.

It belongs to the FKBP-type PPIase family.

The catalysed reaction is [protein]-peptidylproline (omega=180) = [protein]-peptidylproline (omega=0). In terms of biological role, PPIases accelerate the folding of proteins. It catalyzes the cis-trans isomerization of proline imidic peptide bonds in oligopeptides. The chain is Peptidyl-prolyl cis-trans isomerase FKBP15-3 (FKBP15-3) from Arabidopsis thaliana (Mouse-ear cress).